The chain runs to 513 residues: ATP synthase subunit alpha (513 aa).

Residue 169-176 participates in ATP binding; sequence GDRQIGKT.

The protein belongs to the ATPase alpha/beta chains family. F-type ATPases have 2 components, CF(1) - the catalytic core - and CF(0) - the membrane proton channel. CF(1) has five subunits: alpha(3), beta(3), gamma(1), delta(1), epsilon(1). CF(0) has three main subunits: a(1), b(2) and c(9-12). The alpha and beta chains form an alternating ring which encloses part of the gamma chain. CF(1) is attached to CF(0) by a central stalk formed by the gamma and epsilon chains, while a peripheral stalk is formed by the delta and b chains.

Its subcellular location is the cell inner membrane. The enzyme catalyses ATP + H2O + 4 H(+)(in) = ADP + phosphate + 5 H(+)(out). In terms of biological role, produces ATP from ADP in the presence of a proton gradient across the membrane. The alpha chain is a regulatory subunit. In Vibrio alginolyticus, this protein is ATP synthase subunit alpha.